Here is a 380-residue protein sequence, read N- to C-terminus: Cytochrome b (380 aa).

The next 4 membrane-spanning stretches (helical) occupy residues 34 to 54, 78 to 99, 114 to 134, and 179 to 199; these read FGSLLGICLLTQILTGLLLAT, WLIRNLHANGASFFFICIYLHI, WNTGVILLLALMATAFVGYVL, and FFALHFLLPFMIAGLALIHLT. Residues His84 and His98 each contribute to the heme b site. 2 residues coordinate heme b: His183 and His197. Position 202 (His202) interacts with a ubiquinone. 4 consecutive transmembrane segments (helical) span residues 227–247, 289–309, 321–341, and 348–368; these read LKDILGFIIMFLPLTTLALFS, LGGVLALAASVLVLFLAPLLH, FSQFLFWTLAANLFILTWVGS, and FIIIGQLASLTYFTILLLLFP.

Belongs to the cytochrome b family. The cytochrome bc1 complex contains 11 subunits: 3 respiratory subunits (MT-CYB, CYC1 and UQCRFS1), 2 core proteins (UQCRC1 and UQCRC2) and 6 low-molecular weight proteins (UQCRH/QCR6, UQCRB/QCR7, UQCRQ/QCR8, UQCR10/QCR9, UQCR11/QCR10 and a cleavage product of UQCRFS1). This cytochrome bc1 complex then forms a dimer. Requires heme b as cofactor.

It is found in the mitochondrion inner membrane. In terms of biological role, component of the ubiquinol-cytochrome c reductase complex (complex III or cytochrome b-c1 complex) that is part of the mitochondrial respiratory chain. The b-c1 complex mediates electron transfer from ubiquinol to cytochrome c. Contributes to the generation of a proton gradient across the mitochondrial membrane that is then used for ATP synthesis. This is Cytochrome b (MT-CYB) from Alca torda (Razorbill).